A 193-amino-acid chain; its full sequence is Superoxide dismutase [Fe] (193 aa).

His27 contributes to the Fe cation binding site. Lys51 carries the N6-acetyllysine modification. Fe cation-binding residues include His74, Asp157, and His161.

This sequence belongs to the iron/manganese superoxide dismutase family. As to quaternary structure, homodimer. The cofactor is Fe cation.

The enzyme catalyses 2 superoxide + 2 H(+) = H2O2 + O2. Functionally, destroys superoxide anion radicals which are normally produced within the cells and which are toxic to biological systems. The protein is Superoxide dismutase [Fe] (sodB) of Escherichia coli O157:H7.